Consider the following 168-residue polypeptide: Small ribosomal subunit protein uS8 (168 aa).

Residues 59–93 are not found in other S8 sequences; sequence EEFKKMKELAEKSPNPKMRRYLQQLIDYNKGTQYP.

The protein belongs to the universal ribosomal protein uS8 family. In terms of assembly, part of the 30S ribosomal subunit. Contacts proteins S5 and S12.

Its function is as follows. One of the primary rRNA binding proteins, it binds directly to 16S rRNA central domain where it helps coordinate assembly of the platform of the 30S subunit. This is Small ribosomal subunit protein uS8 from Aquifex pyrophilus.